Reading from the N-terminus, the 296-residue chain is GTP-binding protein GEM (296 aa).

2 disordered regions span residues 1–20 (MTLNNVTMRQGTVGMQPQQQ) and 37–68 (PHQYSHRNRHSATPEDHCRRSWSSDSTDSVIS). Residues 57–68 (SWSSDSTDSVIS) show a composition bias toward low complexity. Residues 82-89 (GEQGVGKS) and 191-194 (NKSD) contribute to the GTP site. The calmodulin-binding stretch occupies residues 266–285 (ARRFWGKIVAKNNKNMAFKL).

The protein belongs to the small GTPase superfamily. RGK family. In terms of assembly, interacts with calmodulin in a Ca(2+)-dependent manner. Binds ROCK1. Phosphorylated on tyrosine residues. As to expression, most abundant in thymus, spleen, kidney, lung, and testis. Less abundant in heart, brain, liver and skeletal muscle.

It is found in the cell membrane. Its function is as follows. Could be a regulatory protein, possibly participating in receptor-mediated signal transduction at the plasma membrane. Has guanine nucleotide-binding activity but undetectable intrinsic GTPase activity. The sequence is that of GTP-binding protein GEM (GEM) from Homo sapiens (Human).